The chain runs to 293 residues: Formamidopyrimidine-DNA glycosylase (293 aa).

The Schiff-base intermediate with DNA role is filled by Pro2. The active-site Proton donor is the Glu3. Residue Lys58 is the Proton donor; for beta-elimination activity of the active site. Residues His104, Arg123, and Arg166 each coordinate DNA. The FPG-type zinc finger occupies 257–293 (AVYDREGEPCRSKGCDGVVKRFVQNGRSTFWCPKCQK). Arg283 functions as the Proton donor; for delta-elimination activity in the catalytic mechanism.

It belongs to the FPG family. Monomer. It depends on Zn(2+) as a cofactor.

It carries out the reaction Hydrolysis of DNA containing ring-opened 7-methylguanine residues, releasing 2,6-diamino-4-hydroxy-5-(N-methyl)formamidopyrimidine.. The catalysed reaction is 2'-deoxyribonucleotide-(2'-deoxyribose 5'-phosphate)-2'-deoxyribonucleotide-DNA = a 3'-end 2'-deoxyribonucleotide-(2,3-dehydro-2,3-deoxyribose 5'-phosphate)-DNA + a 5'-end 5'-phospho-2'-deoxyribonucleoside-DNA + H(+). Its function is as follows. Involved in base excision repair of DNA damaged by oxidation or by mutagenic agents. Acts as a DNA glycosylase that recognizes and removes damaged bases. Has a preference for oxidized purines, such as 7,8-dihydro-8-oxoguanine (8-oxoG). Has AP (apurinic/apyrimidinic) lyase activity and introduces nicks in the DNA strand. Cleaves the DNA backbone by beta-delta elimination to generate a single-strand break at the site of the removed base with both 3'- and 5'-phosphates. This chain is Formamidopyrimidine-DNA glycosylase, found in Rhodopseudomonas palustris (strain BisB18).